We begin with the raw amino-acid sequence, 227 residues long: GTP:AMP phosphotransferase AK3, mitochondrial (227 aa).

GTP-binding residues include glycine 17, glycine 19, lysine 20, glycine 21, and threonine 22. Lysine 20 is subject to N6-succinyllysine. N6-acetyllysine is present on lysine 34. Phosphoserine is present on serine 37. Residues 37–66 (SSGDLLRDNMLRGTEIGVLAKAFIDQGKLI) are NMP. AMP contacts are provided by serine 38 and arginine 43. Residue lysine 57 is modified to N6-succinyllysine. AMP is bound at residue lysine 64. Residues lysine 64 and lysine 80 each carry the N6-acetyllysine; alternate modification. An N6-succinyllysine; alternate mark is found at lysine 64 and lysine 80. Positions 91, 94, and 98 each coordinate AMP. An LID region spans residues 127 to 164 (ARWIHPASGRVYNIEFNPPKTVGIDDLTGEPLIQREDD). Residues arginine 128, tyrosine 138, asparagine 139, arginine 161, and arginine 172 each coordinate GTP. N6-acetyllysine; alternate is present on residues lysine 174 and lysine 189. N6-succinyllysine; alternate occurs at positions 174 and 189. Threonine 201 contacts GTP. N6-acetyllysine is present on lysine 203.

The protein belongs to the adenylate kinase family. AK3 subfamily. In terms of assembly, monomer. As to expression, highly expressed in heart, skeletal muscle and liver, moderately expressed in pancreas and kidney, and weakly expressed in placenta, brain and lung.

It localises to the mitochondrion matrix. It catalyses the reaction a ribonucleoside 5'-triphosphate + AMP = a ribonucleoside 5'-diphosphate + ADP. It carries out the reaction GTP + AMP = GDP + ADP. The enzyme catalyses ITP + AMP = IDP + ADP. With respect to regulation, inhibited by ATP. Mitochondrial adenylate kinase with a specific GTP:AMP phosphotransferase activity. Could also use ITP as phosphate donor. Its physiological function is to recycle GTP into GDP which is necessary for the TCA cycle in the mitochondrial matrix. The polypeptide is GTP:AMP phosphotransferase AK3, mitochondrial (Homo sapiens (Human)).